We begin with the raw amino-acid sequence, 333 residues long: Phenylalanine--tRNA ligase alpha subunit (333 aa).

A Mg(2+)-binding site is contributed by Glu254.

Belongs to the class-II aminoacyl-tRNA synthetase family. Phe-tRNA synthetase alpha subunit type 1 subfamily. In terms of assembly, tetramer of two alpha and two beta subunits. The cofactor is Mg(2+).

It is found in the cytoplasm. It catalyses the reaction tRNA(Phe) + L-phenylalanine + ATP = L-phenylalanyl-tRNA(Phe) + AMP + diphosphate + H(+). The protein is Phenylalanine--tRNA ligase alpha subunit (pheS) of Xylella fastidiosa (strain 9a5c).